An 83-amino-acid polypeptide reads, in one-letter code: Snake venom metalloproteinase BnP1 (83 aa).

One can recognise a Peptidase M12B domain in the interval 8 to 83 (SYIELAVVAD…NPQCIINQPI (76 aa)). 3 residues coordinate Ca(2+): E11, C77, and N80.

Belongs to the venom metalloproteinase (M12B) family. P-I subfamily. As to quaternary structure, monomer. Requires Zn(2+) as cofactor. In terms of tissue distribution, expressed by the venom gland.

It localises to the secreted. Its activity is regulated as follows. Inhibited by EDTA. Its function is as follows. This protein is a zinc protease from snake venom that is devoid of significant myotoxic and hemorrhagic activities. It hydrolyzes the Aalpha-chain and more slowly the Bbeta-chain of fibrin and fibrinogen, without affecting the gamma-chains. It induces cell detachment and a apoptosis (anoikis) in endothelial cells. This is Snake venom metalloproteinase BnP1 from Bothrops pauloensis (Neuwied's lancehead).